Consider the following 66-residue polypeptide: Large ribosomal subunit protein bL35 (66 aa).

Basic residues-rich tracts occupy residues 1-26 (MPKM…KRSH) and 38-48 (QKQKRKLRKSA). Residues 1-48 (MPKMKTHKGAAKRFKKTGSGKLKRSHAFTSHLFANKSQKQKRKLRKSA) form a disordered region.

The protein belongs to the bacterial ribosomal protein bL35 family.

The chain is Large ribosomal subunit protein bL35 from Halalkalibacterium halodurans (strain ATCC BAA-125 / DSM 18197 / FERM 7344 / JCM 9153 / C-125) (Bacillus halodurans).